Reading from the N-terminus, the 356-residue chain is Protein-arginine kinase (356 aa).

The 231-residue stretch at 24-254 (IVLSSRIRLA…MQLIQQERAA (231 aa)) folds into the Phosphagen kinase C-terminal domain. Residues 27–31 (SSRIR), His-91, Arg-125, 176–180 (RASVM), and 207–212 (RGIYGE) contribute to the ATP site. The short motif at 337 to 342 (RDERRA) is the RDXXRA motif of the pArg binding pocket involved in allosteric regulation element.

The protein belongs to the ATP:guanido phosphotransferase family.

It carries out the reaction L-arginyl-[protein] + ATP = N(omega)-phospho-L-arginyl-[protein] + ADP + H(+). With respect to regulation, appears to be allosterically activated by the binding of pArg-containing polypeptides to the pArg-binding pocket localized in the C-terminal domain of McsB. Its function is as follows. Catalyzes the specific phosphorylation of arginine residues in a large number of proteins. Is part of the bacterial stress response system. Protein arginine phosphorylation has a physiologically important role and is involved in the regulation of many critical cellular processes, such as protein homeostasis, motility, competence, and stringent and stress responses, by regulating gene expression and protein activity. This Halalkalibacterium halodurans (strain ATCC BAA-125 / DSM 18197 / FERM 7344 / JCM 9153 / C-125) (Bacillus halodurans) protein is Protein-arginine kinase.